The chain runs to 2298 residues: Protein Ycf2 (2298 aa).

Position 1652 to 1659 (1652 to 1659 (GSIGTGRS)) interacts with ATP.

Belongs to the Ycf2 family.

The protein localises to the plastid. The protein resides in the chloroplast stroma. Functionally, probable ATPase of unknown function. Its presence in a non-photosynthetic plant (Epifagus virginiana) and experiments in tobacco indicate that it has an essential function which is probably not related to photosynthesis. In Aethionema cordifolium (Lebanon stonecress), this protein is Protein Ycf2.